Consider the following 436-residue polypeptide: Homeobox protein PKNOX1 (436 aa).

Residues 23–50 (ELKTEQDPNCSDPDAEGVSPPPIESQTP) form a disordered region. A phosphoserine mark is found at S33 and S41. Positions 80 to 163 (GSEGTTSASF…MNSETLLSGE (84 aa)) constitute an MEIS N-terminal domain. The segment at residues 259-321 (SKNKRGVLPK…NARRRILQPM (63 aa)) is a DNA-binding region (homeobox; TALE-type). The segment at 401–436 (AGQSEDESVDSTEDEGGALAPTHISGLVLENSDSLQ) is disordered. Residues 404-416 (SEDESVDSTEDEG) are compositionally biased toward acidic residues.

It belongs to the TALE/MEIS homeobox family. As to quaternary structure, interacts with MN1.

It is found in the nucleus. Functionally, activates transcription in the presence of PBX1A and HOXA1. Its function is as follows. (Microbial infection) In complex with PBX1, binds to the 5'-TGATTGAC-3' consensus sequence in the U5 region of Moloney murine leukemia virus and promotes viral transcription. In Mus musculus (Mouse), this protein is Homeobox protein PKNOX1.